The chain runs to 373 residues: tRNA-specific 2-thiouridylase MnmA (373 aa).

Residues 12-19 (GMSGGVDS) and methionine 38 each bind ATP. Residues 98–100 (NPD) are interaction with target base in tRNA. The active-site Nucleophile is the cysteine 103. Cysteine 103 and cysteine 200 form a disulfide bridge. An ATP-binding site is contributed by glycine 127. An interaction with tRNA region spans residues 150-152 (KDQ). Catalysis depends on cysteine 200, which acts as the Cysteine persulfide intermediate. Residues 312-313 (RY) are interaction with tRNA.

Belongs to the MnmA/TRMU family.

The protein resides in the cytoplasm. The enzyme catalyses S-sulfanyl-L-cysteinyl-[protein] + uridine(34) in tRNA + AH2 + ATP = 2-thiouridine(34) in tRNA + L-cysteinyl-[protein] + A + AMP + diphosphate + H(+). Catalyzes the 2-thiolation of uridine at the wobble position (U34) of tRNA, leading to the formation of s(2)U34. The protein is tRNA-specific 2-thiouridylase MnmA of Streptococcus pyogenes serotype M2 (strain MGAS10270).